A 469-amino-acid chain; its full sequence is Glutamine synthetase (469 aa).

Positions 13–97 (KEVRYVDLRF…LRCDIVEPAT (85 aa)) constitute a GS beta-grasp domain. Residues 105 to 469 (PRSIAKRAEA…PVEFDMYYSL (365 aa)) form the GS catalytic domain. Mg(2+)-binding residues include Glu-130 and Glu-132. Glu-208 contacts ATP. Residues Glu-213 and Glu-221 each coordinate Mg(2+). L-glutamate contacts are provided by residues 265 to 266 (NG) and Gly-266. His-270 provides a ligand contact to Mg(2+). ATP-binding positions include 272–274 (HQS) and Ser-274. Residues Arg-322, Glu-328, and Arg-340 each coordinate L-glutamate. Residues Arg-340, Arg-345, and Lys-353 each contribute to the ATP site. A Mg(2+)-binding site is contributed by Glu-358. An L-glutamate-binding site is contributed by Arg-360. O-AMP-tyrosine is present on Tyr-398.

The protein belongs to the glutamine synthetase family. Oligomer of 12 subunits arranged in the form of two hexameric ring. Requires Mg(2+) as cofactor.

The protein resides in the cytoplasm. It catalyses the reaction L-glutamate + NH4(+) + ATP = L-glutamine + ADP + phosphate + H(+). With respect to regulation, the activity of this enzyme could be controlled by adenylation under conditions of abundant glutamine. Its function is as follows. Catalyzes the ATP-dependent biosynthesis of glutamine from glutamate and ammonia. This chain is Glutamine synthetase, found in Methylococcus capsulatus (strain ATCC 33009 / NCIMB 11132 / Bath).